A 316-amino-acid chain; its full sequence is Ribose-phosphate pyrophosphokinase (316 aa).

ATP contacts are provided by residues 41–43 (DGE) and 100–101 (RQ). Mg(2+) contacts are provided by histidine 134 and aspartate 174. Lysine 197 is an active-site residue. D-ribose 5-phosphate-binding positions include arginine 199, aspartate 223, and 227-231 (DTAGT).

This sequence belongs to the ribose-phosphate pyrophosphokinase family. Class I subfamily. Homohexamer. Mg(2+) is required as a cofactor.

Its subcellular location is the cytoplasm. The enzyme catalyses D-ribose 5-phosphate + ATP = 5-phospho-alpha-D-ribose 1-diphosphate + AMP + H(+). It functions in the pathway metabolic intermediate biosynthesis; 5-phospho-alpha-D-ribose 1-diphosphate biosynthesis; 5-phospho-alpha-D-ribose 1-diphosphate from D-ribose 5-phosphate (route I): step 1/1. Its function is as follows. Involved in the biosynthesis of the central metabolite phospho-alpha-D-ribosyl-1-pyrophosphate (PRPP) via the transfer of pyrophosphoryl group from ATP to 1-hydroxyl of ribose-5-phosphate (Rib-5-P). This chain is Ribose-phosphate pyrophosphokinase, found in Caldanaerobacter subterraneus subsp. tengcongensis (strain DSM 15242 / JCM 11007 / NBRC 100824 / MB4) (Thermoanaerobacter tengcongensis).